Reading from the N-terminus, the 109-residue chain is Cell division suppressor protein YneA (109 aa).

Residues 39–90 (SEVNVSEGDSLWALADQYAGKSDMAKADFVSWVEKENNLADGHVEAGESVVI) form the LysM domain.

Belongs to the YneA family.

Its subcellular location is the cytoplasm. Inhibits cell division during the SOS response. Affects a later stage of the cell division protein assembly, after the assembly of the Z ring, by probably suppressing recruitment of FtsL and/or DivIC to the division machinery. The polypeptide is Cell division suppressor protein YneA (Listeria monocytogenes serotype 4b (strain F2365)).